A 282-amino-acid chain; its full sequence is Glycine/sarcosine N-methyltransferase (282 aa).

The segment covering 1–23 has biased composition (polar residues); sequence MTSTQNHPLQTQDDQQRFGQSPE. The segment at 1 to 27 is disordered; sequence MTSTQNHPLQTQDDQQRFGQSPESVRE. Residues Tyr-35, Trp-43, Arg-52, Ala-76, Asp-97, 123-124, and Leu-141 each bind S-adenosyl-L-methionine; that span reads DW. Residues Asn-143, Arg-176, and Tyr-217 each contribute to the substrate site.

This sequence belongs to the class I-like SAM-binding methyltransferase superfamily. Glycine N-methyltransferase family. As to quaternary structure, monomer.

It carries out the reaction glycine + 2 S-adenosyl-L-methionine = N,N-dimethylglycine + 2 S-adenosyl-L-homocysteine + 2 H(+). The catalysed reaction is glycine + S-adenosyl-L-methionine = sarcosine + S-adenosyl-L-homocysteine + H(+). The enzyme catalyses sarcosine + S-adenosyl-L-methionine = N,N-dimethylglycine + S-adenosyl-L-homocysteine + H(+). It participates in amine and polyamine biosynthesis; betaine biosynthesis via glycine pathway; betaine from glycine: step 1/3. The protein operates within amine and polyamine biosynthesis; betaine biosynthesis via glycine pathway; betaine from glycine: step 2/3. Its function is as follows. Catalyzes the methylation of glycine and sarcosine to sarcosine and dimethylglycine, respectively, with S-adenosylmethionine (AdoMet) acting as the methyl donor. It has strict specificity for glycine and sarcosine as the methyl group acceptors. The sequence is that of Glycine/sarcosine N-methyltransferase from Parasynechococcus marenigrum (strain WH8102).